The chain runs to 425 residues: MLTTRPRGTNDILPGEVEKWQYIESQFRRICREYGYGEIRTPVFEHTELFLRGVGDTTDIVEKEMYTFTDRGGRSITLRPENTAPAVRAYLENRLYAGPQPVKLFYAGPMFRYDRPQAGRFRQFHQLGVEVFGSHDPAVDAEVMAMAMDFYGRLGLKNLELHINSVGCPVCRPLLRRRLQDYFRPHLERLCKNCRSRFDKNPLRVLDCKEAACAEIGADAPFAIDCLCESCLEHFEKVKKYLELLNVSYTVNRRLVRGLDYYTHTAFEVTARDIGAQSSIGGGGRYNGLVEVCGGPPTPGVGYALGLERIILALRQQGIGLPGESGPEVFLATAGQAVMPEAFGLLFRLRSAGISADKDYLDRSLKAQMKYAGKIGARYAVIIGESELKQGTVLVRDMAAGEQSAVKLDGVLQYLREKITGRKQS.

Belongs to the class-II aminoacyl-tRNA synthetase family. As to quaternary structure, homodimer.

The protein localises to the cytoplasm. The catalysed reaction is tRNA(His) + L-histidine + ATP = L-histidyl-tRNA(His) + AMP + diphosphate + H(+). In Pelotomaculum thermopropionicum (strain DSM 13744 / JCM 10971 / SI), this protein is Histidine--tRNA ligase.